The sequence spans 260 residues: Hemin import ATP-binding protein HmuV (260 aa).

In terms of domain architecture, ABC transporter spans 6 to 242 (LHADNLHYRA…VQLRACYQAD (237 aa)). An ATP-binding site is contributed by 38–45 (GPNGAGKS).

It belongs to the ABC transporter superfamily. Heme (hemin) importer (TC 3.A.1.14.5) family. The complex is composed of two ATP-binding proteins (HmuV), two transmembrane proteins (HmuU) and a solute-binding protein (HmuT).

The protein resides in the cell inner membrane. Part of the ABC transporter complex HmuTUV involved in hemin import. Responsible for energy coupling to the transport system. The polypeptide is Hemin import ATP-binding protein HmuV (Sodalis glossinidius (strain morsitans)).